Reading from the N-terminus, the 113-residue chain is Na(+)/H(+) antiporter subunit C1 (113 aa).

The next 3 helical transmembrane spans lie at 1–21 (MEIIMIFVSGILTAISVYLVL), 28–48 (IVMGTTLLTHAANLFLITMGG), and 72–92 (LILTAIVIAFATTAFFLVLAF).

Belongs to the CPA3 antiporters (TC 2.A.63) subunit C family. May form a heterooligomeric complex that consists of seven subunits: mnhA1, mnhB1, mnhC1, mnhD1, mnhE1, mnhF1 and mnhG1.

The protein localises to the cell membrane. Its function is as follows. Mnh complex is a Na(+)/H(+) antiporter involved in Na(+) excretion. The protein is Na(+)/H(+) antiporter subunit C1 (mnhC1) of Staphylococcus aureus (strain JH1).